Consider the following 328-residue polypeptide: Naphthalene 1,2-dioxygenase system ferredoxin--NAD(P)(+), reductase component (328 aa).

A 2Fe-2S ferredoxin-type domain is found at 1–89 (MELLIQPNNR…NCAIEVPEAD (89 aa)). Residues Cys35, Cys40, Cys43, and Cys73 each coordinate [2Fe-2S] cluster. An FAD-binding FR-type domain is found at 96–193 (ARIIKGTVVA…SGPLGTAYLR (98 aa)).

Belongs to the bacterial ring-hydroxylating dioxygenase ferredoxin reductase component family. The naphthalene dioxygenase (NDO) multicomponent enzyme system is composed of an electron transfer component and a dioxygenase component (iron sulfur protein (ISP)). The electron transfer component is composed of a ferredoxin reductase (NdoR) and a ferredoxin (NdoA), and the dioxygenase component is formed of a heterohexamer (trimer of heterodimers) of three large alpha subunits (NdoB) and three small beta subunits (NdoC). It depends on [2Fe-2S] cluster as a cofactor. FAD is required as a cofactor.

It carries out the reaction 2 reduced [2Fe-2S]-[ferredoxin] + NAD(+) + H(+) = 2 oxidized [2Fe-2S]-[ferredoxin] + NADH. The enzyme catalyses 2 reduced [2Fe-2S]-[ferredoxin] + NADP(+) + H(+) = 2 oxidized [2Fe-2S]-[ferredoxin] + NADPH. Its pathway is aromatic compound metabolism; naphthalene degradation. Strongly inhibited by p-chloromercuribenzoate. Also inhibited by N-ethylmaleimide and o-phenanthroline. Its function is as follows. Component of the naphthalene dioxygenase (NDO) multicomponent enzyme system which catalyzes the incorporation of both atoms of molecular oxygen into naphthalene to form cis-(1R,2S)-dihydroxy-1,2-dihydronaphthalene. Ferredoxin reductase catalyzes the transfer of electrons from NADH to ferredoxin (NdoA). NADPH is also effective but yields only 39% of the activity obtained with NADH. Also able to catalyze the cis-dihydroxylation of biphenyl and phenanthrene. The chain is Naphthalene 1,2-dioxygenase system ferredoxin--NAD(P)(+), reductase component (ndoR) from Pseudomonas putida (Arthrobacter siderocapsulatus).